The sequence spans 498 residues: ATP synthase subunit beta, chloroplastic (498 aa).

Phosphothreonine is present on Thr6. A Phosphoserine modification is found at Ser13. An ATP-binding site is contributed by 172–179 (GGAGVGKT).

This sequence belongs to the ATPase alpha/beta chains family. As to quaternary structure, F-type ATPases have 2 components, CF(1) - the catalytic core - and CF(0) - the membrane proton channel. CF(1) has five subunits: alpha(3), beta(3), gamma(1), delta(1), epsilon(1). CF(0) has four main subunits: a(1), b(1), b'(1) and c(9-12).

It localises to the plastid. The protein localises to the chloroplast thylakoid membrane. The catalysed reaction is ATP + H2O + 4 H(+)(in) = ADP + phosphate + 5 H(+)(out). In terms of biological role, produces ATP from ADP in the presence of a proton gradient across the membrane. The catalytic sites are hosted primarily by the beta subunits. This chain is ATP synthase subunit beta, chloroplastic, found in Capsella bursa-pastoris (Shepherd's purse).